Reading from the N-terminus, the 689-residue chain is Glycine--tRNA ligase beta subunit (689 aa).

It belongs to the class-II aminoacyl-tRNA synthetase family. Tetramer of two alpha and two beta subunits.

The protein resides in the cytoplasm. The catalysed reaction is tRNA(Gly) + glycine + ATP = glycyl-tRNA(Gly) + AMP + diphosphate. This chain is Glycine--tRNA ligase beta subunit, found in Shewanella baltica (strain OS223).